The sequence spans 1216 residues: ATP-dependent DNA helicase Q4 (1216 aa).

Disordered stretches follow at residues 72–100 (EAQE…QSLL) and 113–171 (NLKN…PRLG). Polar residues-rich tracts occupy residues 86 to 100 (AATQ…QSLL) and 114 to 137 (LKNT…SLST). Phosphoserine is present on residues S179 and S181. Residues 235 to 340 (SEVSVQSPEA…LHASPRPASL (106 aa)) form a disordered region. Composition is skewed to polar residues over residues 248 to 262 (QPAQ…SINS) and 306 to 320 (TQVN…SNQA). The CCHC-type zinc-finger motif lies at 393 to 410 (DTCFRCGQFGHWASQCSQ). Residues 436–458 (AQRTGTASCHHSGEETQPAAPEL) are disordered. The Helicase ATP-binding domain maps to 506-684 (IMRILSGIST…AQHLGIAGEF (179 aa)). 519–526 (LPTGAGKS) provides a ligand contact to ATP. The DEAH box signature appears at 627-630 (DEVH). The region spanning 705–872 (DSDQALVTLL…AVKRLVQRVF (168 aa)) is the Helicase C-terminal domain. 4 residues coordinate Zn(2+): C875, C877, C906, and H909.

It belongs to the helicase family. RecQ subfamily. As to quaternary structure, interacts with UBR1 and UBR2. Interacts with MCM10; this interaction regulates RECQL4 unwinding activity. Interacts with TOPBP1. Requires Zn(2+) as cofactor.

It localises to the cytoplasm. The protein localises to the nucleus. The catalysed reaction is Couples ATP hydrolysis with the unwinding of duplex DNA by translocating in the 3'-5' direction.. The enzyme catalyses ATP + H2O = ADP + phosphate + H(+). Functionally, an ATP-dependent DNA helicase which unwinds dsDNA with a 3'-overhang in a 3'-5' direction. May play a role in development of the palate and the limbs. May modulate chromosome segregation. This is ATP-dependent DNA helicase Q4 (Recql4) from Mus musculus (Mouse).